A 49-amino-acid polypeptide reads, in one-letter code: Large ribosomal subunit protein bL33 (49 aa).

The tract at residues 18–49 (ITTKNKRNNPERLELKKYSPRLKRTTLHRETK) is disordered. Basic and acidic residues predominate over residues 25 to 34 (NNPERLELKK).

The protein belongs to the bacterial ribosomal protein bL33 family.

The chain is Large ribosomal subunit protein bL33 from Lysinibacillus sphaericus (strain C3-41).